A 369-amino-acid polypeptide reads, in one-letter code: Ferredoxin--NADP reductase 2 (369 aa).

Residues 1–23 (MDLSIPNPVADTTKQVDGGSPAG) are disordered. Aspartate 58, glutamine 66, tyrosine 71, valine 111, phenylalanine 146, aspartate 311, and threonine 352 together coordinate FAD.

It belongs to the ferredoxin--NADP reductase type 2 family. In terms of assembly, homodimer. FAD is required as a cofactor.

The enzyme catalyses 2 reduced [2Fe-2S]-[ferredoxin] + NADP(+) + H(+) = 2 oxidized [2Fe-2S]-[ferredoxin] + NADPH. This Cupriavidus necator (strain ATCC 17699 / DSM 428 / KCTC 22496 / NCIMB 10442 / H16 / Stanier 337) (Ralstonia eutropha) protein is Ferredoxin--NADP reductase 2.